The primary structure comprises 321 residues: Glucokinase (321 aa).

Residue 8–13 (GDVGGT) coordinates ATP.

Belongs to the bacterial glucokinase family.

It localises to the cytoplasm. The enzyme catalyses D-glucose + ATP = D-glucose 6-phosphate + ADP + H(+). This is Glucokinase from Escherichia coli O127:H6 (strain E2348/69 / EPEC).